A 184-amino-acid polypeptide reads, in one-letter code: Ras-related protein Rap1 (184 aa).

10-17 (GSGGVGKS) is a GTP binding site. An Effector region motif is present at residues 32–40 (YDPTIEDSY). GTP-binding positions include 57 to 61 (DTAGT) and 116 to 119 (NKCD). C181 carries the cysteine methyl ester modification. C181 is lipidated: S-geranylgeranyl cysteine. A propeptide spans 182-184 (VLL) (removed in mature form).

Belongs to the small GTPase superfamily. Ras family.

It localises to the cell membrane. It catalyses the reaction GTP + H2O = GDP + phosphate + H(+). Its activity is regulated as follows. Alternates between an inactive form bound to GDP and an active form bound to GTP. Activated by a guanine nucleotide-exchange factor (GEF) and inactivated by a GTPase-activating protein (GAP). Functionally, ras proteins bind GDP/GTP and possess intrinsic GTPase activity. Plays a role in photoreceptor cell determination. This Drosophila melanogaster (Fruit fly) protein is Ras-related protein Rap1.